A 473-amino-acid polypeptide reads, in one-letter code: 3-isopropylmalate dehydratase large subunit (473 aa).

Residues Cys355, Cys415, and Cys418 each coordinate [4Fe-4S] cluster. The disordered stretch occupies residues 423–452 (PDQLAPGERSASTSNRNFEGRQGKGGRTHL).

This sequence belongs to the aconitase/IPM isomerase family. LeuC type 1 subfamily. Heterodimer of LeuC and LeuD. It depends on [4Fe-4S] cluster as a cofactor.

The catalysed reaction is (2R,3S)-3-isopropylmalate = (2S)-2-isopropylmalate. The protein operates within amino-acid biosynthesis; L-leucine biosynthesis; L-leucine from 3-methyl-2-oxobutanoate: step 2/4. In terms of biological role, catalyzes the isomerization between 2-isopropylmalate and 3-isopropylmalate, via the formation of 2-isopropylmaleate. In Corynebacterium jeikeium (strain K411), this protein is 3-isopropylmalate dehydratase large subunit.